The sequence spans 328 residues: Cytochrome c biogenesis protein CcsA (328 aa).

Helical transmembrane passes span 13–33 (ISFS…LVNL), 46–66 (GIVI…IYSG), 73–93 (LYES…VSYF), 101–121 (LNAI…SGLL), 146–166 (MILG…LLVI), 234–254 (IISL…VWAN), 263–283 (WDPK…YLHI), and 295–315 (AIVA…VNLL).

The protein belongs to the CcmF/CycK/Ccl1/NrfE/CcsA family. May interact with Ccs1.

It localises to the plastid. The protein resides in the chloroplast thylakoid membrane. In terms of biological role, required during biogenesis of c-type cytochromes (cytochrome c6 and cytochrome f) at the step of heme attachment. The sequence is that of Cytochrome c biogenesis protein CcsA from Nasturtium officinale (Watercress).